Here is a 99-residue protein sequence, read N- to C-terminus: MADYKIHLLCEEEGIDVTFNCAEDTYILDAAEEEGIELPYSCRAGACSTCAGKVTEGTVDQADQSFLDDDQLLAGYVLTCIAYPSSDCTISTHVEQELY.

One can recognise a 2Fe-2S ferredoxin-type domain in the interval 4–96; it reads YKIHLLCEEE…DCTISTHVEQ (93 aa). Residues C42, C47, C50, and C80 each coordinate [2Fe-2S] cluster.

This sequence belongs to the 2Fe2S plant-type ferredoxin family. As to quaternary structure, forms a complex with heterodimeric ferredoxin-thioredoxin reductase (FTR) and thioredoxin. [2Fe-2S] cluster is required as a cofactor.

The protein localises to the plastid. The protein resides in the chloroplast. Ferredoxins are iron-sulfur proteins that transfer electrons in a wide variety of metabolic reactions. This chain is Ferredoxin (petF), found in Pyropia yezoensis (Susabi-nori).